Reading from the N-terminus, the 186-residue chain is Serine hydrolase RBBP9 (186 aa).

The interval 63–67 is involved in binding to RB1; it reads LHCDE. Residues Ser75, Asp138, and His165 each act as charge relay system in the active site.

It belongs to the RBBP9 family. In terms of assembly, interacts with RB1; the interaction disrupts RB1 binding to E2F1. Interacts with RBL1 and RBL2. Highly expressed in the spleen, testis and kidney. Also found in the heart, liver, lung and brain.

The catalysed reaction is valacyclovir + H2O = acyclovir + L-valine + H(+). Its function is as follows. Serine hydrolase. Catalyzes the hydrolytic activation of amino acid ester of the antiviral prodrug valacyclovir to its corresponding active drug, acyclovir. May negatively regulate basal or autocrine TGF-beta signaling by suppressing SMAD2-SMAD3 phosphorylation. May play a role in the transformation process due to its capacity to confer resistance to the growth-inhibitory effects of TGF-beta through interaction with RB1 and the subsequent displacement of E2F1. This Rattus norvegicus (Rat) protein is Serine hydrolase RBBP9.